Here is a 536-residue protein sequence, read N- to C-terminus: Zinc finger protein 394 (536 aa).

The segment at 18 to 45 is disordered; the sequence is AVKVEEDSPGSQEPSGSGDWQNPETSRK. Lys-20 participates in a covalent cross-link: Glycyl lysine isopeptide (Lys-Gly) (interchain with G-Cter in SUMO2). A compositionally biased stretch (polar residues) spans 26–41; the sequence is PGSQEPSGSGDWQNPE. Positions 44 to 126 constitute an SCAN box domain; that stretch reads RKQFRQLRYQ…ALARTLQRAL (83 aa). Residues 135 to 196 form the KRAB domain; that stretch reads ATFKDVAESL…KQEMSKEAES (62 aa). Residues Lys-207 and Lys-260 each participate in a glycyl lysine isopeptide (Lys-Gly) (interchain with G-Cter in SUMO2) cross-link. 3 consecutive C2H2-type zinc fingers follow at residues 328-350, 356-378, and 384-406; these read YKCD…QRTH, YQCQ…QRTH, and YACP…QRTH. A C2H2-type 4; atypical zinc finger spans residues 412 to 433; the sequence is CKCEECGEIFHISSLFKHQRLH. A Glycyl lysine isopeptide (Lys-Gly) (interchain with G-Cter in SUMO2) cross-link involves residue Lys-413. C2H2-type zinc fingers lie at residues 439–461, 467–489, and 495–517; these read HKCE…QRIH, YMCF…QRTH, and YKCF…QRIH.

This sequence belongs to the krueppel C2H2-type zinc-finger protein family.

The protein localises to the nucleus. In terms of biological role, may be involved in transcriptional regulation. This is Zinc finger protein 394 (Znf394) from Rattus norvegicus (Rat).